The sequence spans 181 residues: Putative NAD(P)H-dependent FMN-containing oxidoreductase YwqN (181 aa).

Belongs to the SsuE family. FMN serves as cofactor.

In terms of biological role, putative NADPH-dependent oxidoreductase. This chain is Putative NAD(P)H-dependent FMN-containing oxidoreductase YwqN (ywqN), found in Bacillus subtilis (strain 168).